An 85-amino-acid polypeptide reads, in one-letter code: Anaphase-promoting complex subunit CDC26 (85 aa).

Residues 7 to 38 adopt a coiled-coil conformation; that stretch reads TRLELKLDDIEEFENIRKDLETRKKQKEDVEV. The tract at residues 30 to 85 is disordered; it reads KKQKEDVEVVGGSDGEGAIGLSSDPKSREQMINDRIGYKPQPKPNNRSSQFGSLEF. 2 positions are modified to phosphoserine: Ser-42 and Ser-82. Over residues 73–85 the composition is skewed to polar residues; the sequence is PNNRSSQFGSLEF.

The protein belongs to the CDC26 family. As to quaternary structure, V-shaped homodimer. Interacts with CDC16. The mammalian APC/C is composed at least of 14 distinct subunits ANAPC1, ANAPC2, CDC27/APC3, ANAPC4, ANAPC5, CDC16/APC6, ANAPC7, CDC23/APC8, ANAPC10, ANAPC11, CDC26/APC12, ANAPC13, ANAPC15 and ANAPC16 that assemble into a complex of at least 19 chains with a combined molecular mass of around 1.2 MDa; APC/C interacts with FZR1 and FBXO5. Interacts with FBXO43.

The protein localises to the nucleus. Its pathway is protein modification; protein ubiquitination. In terms of biological role, component of the anaphase promoting complex/cyclosome (APC/C), a cell cycle-regulated E3 ubiquitin ligase that controls progression through mitosis and the G1 phase of the cell cycle. The APC/C complex acts by mediating ubiquitination and subsequent degradation of target proteins: it mainly mediates the formation of 'Lys-11'-linked polyubiquitin chains and, to a lower extent, the formation of 'Lys-48'- and 'Lys-63'-linked polyubiquitin chains. The APC/C complex catalyzes assembly of branched 'Lys-11'-/'Lys-48'-linked branched ubiquitin chains on target proteins. May recruit the E2 ubiquitin-conjugating enzymes to the complex. The protein is Anaphase-promoting complex subunit CDC26 (CDC26) of Homo sapiens (Human).